We begin with the raw amino-acid sequence, 160 residues long: Serine-protein kinase RsbW (160 aa).

Belongs to the anti-sigma-factor family.

The catalysed reaction is L-seryl-[protein] + ATP = O-phospho-L-seryl-[protein] + ADP + H(+). The enzyme catalyses L-threonyl-[protein] + ATP = O-phospho-L-threonyl-[protein] + ADP + H(+). Negative regulator of sigma-B activity. Phosphorylates and inactivates its specific antagonist protein, RsbV. Upon phosphorylation of RsbV, RsbW is released and binds to sigma-B, thereby blocking its ability to form an RNA polymerase holoenzyme (E-sigma-B). The sequence is that of Serine-protein kinase RsbW from Bacillus thuringiensis (strain Al Hakam).